Here is a 433-residue protein sequence, read N- to C-terminus: KH domain-containing, RNA-binding, signal transduction-associated protein 1 (433 aa).

A disordered region spans residues methionine 1–methionine 79. A compositionally biased stretch (low complexity) spans glycine 41–alanine 76. Residues glutamate 82–methionine 243 form an involved in homodimerization region. The KH domain occupies glutamine 171–lysine 197. Disordered stretches follow at residues glycine 259 to arginine 305, alanine 317 to proline 351, and glutamine 403 to tyrosine 433. The span at alanine 277–arginine 300 shows a compositional bias: pro residues. Residues valine 329–isoleucine 342 are compositionally biased toward low complexity. The segment covering alanine 424–tyrosine 433 has biased composition (basic and acidic residues).

It belongs to the KHDRBS family. Self-associates to form homooligomers when bound to RNA, oligomerization appears to be limited when binding to proteins. Tyrosine phosphorylated by several non-receptor tyrosine kinases including LCK, FYN and JAK3. In terms of processing, acetylated. Positively correlates with ability to bind RNA. Post-translationally, methylated by HRMT1L2. Required for nuclear localization.

The protein localises to the nucleus. Its subcellular location is the cytoplasm. It localises to the membrane. Its function is as follows. Recruited and tyrosine phosphorylated by several receptor systems, for example the T-cell, leptin and insulin receptors. Once phosphorylated, functions as an adapter protein in signal transduction cascades by binding to SH2 and SH3 domain-containing proteins. Role in G2-M progression in the cell cycle. Represses CBP-dependent transcriptional activation apparently by competing with other nuclear factors for binding to CBP. Also acts as a putative regulator of mRNA stability and/or translation rates and mediates mRNA nuclear export. Plays a role in the regulation of alternative splicing and influences mRNA splice site selection and exon inclusion. The chain is KH domain-containing, RNA-binding, signal transduction-associated protein 1 from Gallus gallus (Chicken).